A 254-amino-acid chain; its full sequence is Phosphate import ATP-binding protein PstB (254 aa).

The ABC transporter domain occupies 9–249 (MSVKDLDLFY…PVDKRTEDYI (241 aa)). 41-48 (GPSGCGKS) is a binding site for ATP.

It belongs to the ABC transporter superfamily. Phosphate importer (TC 3.A.1.7) family. In terms of assembly, the complex is composed of two ATP-binding proteins (PstB), two transmembrane proteins (PstC and PstA) and a solute-binding protein (PstS).

It is found in the cell membrane. It catalyses the reaction phosphate(out) + ATP + H2O = ADP + 2 phosphate(in) + H(+). Functionally, part of the ABC transporter complex PstSACB involved in phosphate import. Responsible for energy coupling to the transport system. This chain is Phosphate import ATP-binding protein PstB, found in Clostridioides difficile (strain 630) (Peptoclostridium difficile).